We begin with the raw amino-acid sequence, 64 residues long: Putative antitoxin VapB4 (64 aa).

The protein belongs to the UPF0165 family.

In terms of biological role, possibly the antitoxin component of a type II toxin-antitoxin (TA) system. Its cognate toxin is VapC4 (Potential). The sequence is that of Putative antitoxin VapB4 (vapB4) from Archaeoglobus fulgidus (strain ATCC 49558 / DSM 4304 / JCM 9628 / NBRC 100126 / VC-16).